The sequence spans 191 residues: UPF0312 protein Shewana3_1179 (191 aa).

The signal sequence occupies residues 1-22; the sequence is MKKQLLAALIGGSLLAPMAASA.

This sequence belongs to the UPF0312 family. Type 1 subfamily.

It localises to the periplasm. The protein is UPF0312 protein Shewana3_1179 of Shewanella sp. (strain ANA-3).